A 202-amino-acid polypeptide reads, in one-letter code: MYKRLVQEFFPKLDFENLEKYVNLIEFSNKNFNLTAFSGDILWKEGIFESIFTMNFIVGLVNNKENKKLKILDIGAGSGFPSIPFLITNPEIELTISESMQKRCQFLKDISEKLDLKFNLICKPVQEINPQKFDIITARAVANLEKLEKITKKIHFPKTLLAFIKGPKVFNEVQNCKNCNYKIIKVNNNINKKIFIAFKQVS.

S-adenosyl-L-methionine contacts are provided by residues G75, F80, 125 to 126, and R139; that span reads VQ.

It belongs to the methyltransferase superfamily. RNA methyltransferase RsmG family.

It is found in the cytoplasm. In terms of biological role, specifically methylates the N7 position of a guanine in 16S rRNA. The sequence is that of Ribosomal RNA small subunit methyltransferase G from Mesomycoplasma hyopneumoniae (strain 232) (Mycoplasma hyopneumoniae).